The following is a 350-amino-acid chain: MDSFDYTTPDYGHYDDKDTLDLNTPVDKTSNTLRVPDILALVIFAVVFLVGVLGNALVVWVTAFEAKRTINAIWFLNLAVADFLSCLALPILFTSIVQHHHWPFGGAACSILPSLILLNMYASILLLATISADRFLLVFKPIWCQNFRGAGLAWIACAVAWGLALLLTIPSFLYRVVREEYFPPKVLCGVDYSHDKRRERAVAIVRLVLGFLWPLLTLMICYTFILLRTWSRRATRSTKTLKVVVAVVASFFIFWLPYQVTGIMMSFLEPSSPTFRLLKKLDSLCVSFAYINCCINPIIYVVAGQGFQGRLQKSLPSLLRNVLTEESVVRESKSFARSTVDTMADKTQAV.

At 1–37 (MDSFDYTTPDYGHYDDKDTLDLNTPVDKTSNTLRVPD) the chain is on the extracellular side. Positions 10–18 (DYGHYDDKD) are required for CHIPS binding. Sulfotyrosine occurs at positions 11 and 14. The interval 21–30 (DLNTPVDKTS) is involved in C5a binding. A helical transmembrane segment spans residues 38–64 (ILALVIFAVVFLVGVLGNALVVWVTAF). Topologically, residues 65–69 (EAKRT) are cytoplasmic. A helical transmembrane segment spans residues 70 to 93 (INAIWFLNLAVADFLSCLALPILF). Residues 94 to 110 (TSIVQHHHWPFGGAACS) lie on the Extracellular side of the membrane. A disulfide bridge links Cys-109 with Cys-188. A helical membrane pass occupies residues 111–132 (ILPSLILLNMYASILLLATISA). The Cytoplasmic segment spans residues 133-153 (DRFLLVFKPIWCQNFRGAGLA). The helical transmembrane segment at 154–174 (WIACAVAWGLALLLTIPSFLY) threads the bilayer. Residues 175–200 (RVVREEYFPPKVLCGVDYSHDKRRER) are Extracellular-facing. Residues 201–226 (AVAIVRLVLGFLWPLLTLMICYTFIL) traverse the membrane as a helical segment. Residues 227–242 (LRTWSRRATRSTKTLK) are Cytoplasmic-facing. A helical transmembrane segment spans residues 243 to 265 (VVVAVVASFFIFWLPYQVTGIMM). The Extracellular segment spans residues 266–282 (SFLEPSSPTFRLLKKLD). The helical transmembrane segment at 283 to 303 (SLCVSFAYINCCINPIIYVVA) threads the bilayer. The Cytoplasmic segment spans residues 304–350 (GQGFQGRLQKSLPSLLRNVLTEESVVRESKSFARSTVDTMADKTQAV). Residues Ser-314, Ser-317, Ser-327, Ser-332, Ser-334, and Ser-338 each carry the phosphoserine modification.

The protein belongs to the G-protein coupled receptor 1 family. In terms of assembly, homodimer. May also form higher-order oligomers. Interacts (when phosphorylated) with ARRB1 and ARRB2; the interaction is associated with internalization of C5aR. Interacts (via N-terminal domain) with S.aureus chemotaxis inhibitory protein (CHIPS); the interaction blocks the receptor and may thus inhibit the immune response. Sulfation plays a critical role in the association of C5aR with C5a, but no significant role in the ability of the receptor to transduce a signal and mobilize calcium in response to a small peptide agonist. Sulfation at Tyr-14 is important for CHIPS binding. Post-translationally, phosphorylated on serine residues in response to C5a binding, resulting in internalization of the receptor and short-term desensitization to C5a.

It is found in the cell membrane. The protein localises to the cytoplasmic vesicle. Receptor for the chemotactic and inflammatory peptide anaphylatoxin C5a. The ligand interacts with at least two sites on the receptor: a high-affinity site on the extracellular N-terminus, and a second site in the transmembrane region which activates downstream signaling events. Receptor activation stimulates chemotaxis, granule enzyme release, intracellular calcium release and superoxide anion production. The sequence is that of C5a anaphylatoxin chemotactic receptor 1 (C5AR1) from Pan troglodytes (Chimpanzee).